Consider the following 538-residue polypeptide: Cytochrome P450 monooxygenase cfoH (538 aa).

The chain crosses the membrane as a helical span at residues 24–44 (VLTFFAILLVAILLWYMIPYF). Residue Cys-471 participates in heme binding.

The protein belongs to the cytochrome P450 family. Heme is required as a cofactor.

It localises to the membrane. It participates in secondary metabolite biosynthesis; flavonoid biosynthesis. Cytochrome P450 monooxygenase; part of the gene cluster that mediates the biosynthesis of chlorflavonin, a fungal flavonoid with acetolactate synthase inhibitory activity. Within the pathway, cfoH is responsible for the hydroxylation of the flavonoid skeleton at position C2'. The pathway begins with the PKS-NRPS hybrid synthetase cfoA that uses benzoic acid or p-hydroxybenzoic acid as a starter unit with four rounds of chain elongation using malonyl-CoA to form the chalcone skeleton. Then, a new type of chalcone isomerase, cfoK, catalyzes the conversion of the chalcone into a flavanone by a histidine-mediated oxa-Michael addition mechanism. The desaturation of flavanone to flavone is catalyzed by a new type of flavone synthase, the flavin mononucleotide (FMN)-dependent oxidoreductase cfoJ. Monooxygenases cfoF, cfoG, and P450 cfoH are responsible for the hydroxylation of the flavonoid skeleton at sites C3, C8, and C2', respectively. Like cfoF, the dehydratase cfoI plays also a role in the hydroxylation of position C3. Methyltransferases cfoB, cfoC, and cfoD then catalyze the methylation of C7-OH, C8-OH, and C3-OH, respectively. Finally, the monooxygenase cfoE is responsible for the chlorination of flavonoid at position C3'. The sequence is that of Cytochrome P450 monooxygenase cfoH from Aspergillus candidus.